The sequence spans 300 residues: Ribosomal protein L11 methyltransferase (300 aa).

4 residues coordinate S-adenosyl-L-methionine: T152, G173, D195, and N234.

It belongs to the methyltransferase superfamily. PrmA family.

It is found in the cytoplasm. The enzyme catalyses L-lysyl-[protein] + 3 S-adenosyl-L-methionine = N(6),N(6),N(6)-trimethyl-L-lysyl-[protein] + 3 S-adenosyl-L-homocysteine + 3 H(+). Its function is as follows. Methylates ribosomal protein L11. The polypeptide is Ribosomal protein L11 methyltransferase (Burkholderia vietnamiensis (strain G4 / LMG 22486) (Burkholderia cepacia (strain R1808))).